The primary structure comprises 179 residues: Large ribosomal subunit protein uL6 (179 aa).

This sequence belongs to the universal ribosomal protein uL6 family. In terms of assembly, part of the 50S ribosomal subunit.

Functionally, this protein binds to the 23S rRNA, and is important in its secondary structure. It is located near the subunit interface in the base of the L7/L12 stalk, and near the tRNA binding site of the peptidyltransferase center. This is Large ribosomal subunit protein uL6 from Chlorobium phaeobacteroides (strain BS1).